The primary structure comprises 375 residues: MLKVNNVFGSNPNRMTKLEDEHYFIDDIVSIKNRQKSKMYVREGKRIGHGSFGTVTQSILSSNSIEWLGPYAIKRVVKSPKVQSLELEILQNIRHPNLVTLEFFFESHCTTKDGGHLYQKNFVMEYIPQTLSSEIHEYFDNGSKMPTKHIKLYTFQILRALLTLHSMSICHGDLKPSNILIIPSSGIAKVCDFGSAQRLDDNTELKTYFCSRFYRAPELLLNSKDYTTQIDIWSLGCIIGEMIKGQPLFKGDSANSQLEEIAKLLGRFPKSSIKNSQELQDSLNDQKFKKFMHWFPSIEFFDVEFLLKVLTYDATERCDARQLMAHEFFDALRNETYFLPRGSSMPVHLPDLFNFSASEKRALGEYYNLIVPSLD.

The region spanning 41 to 329 (VREGKRIGHG…ARQLMAHEFF (289 aa)) is the Protein kinase domain. ATP is bound by residues 47–55 (IGHGSFGTV) and Lys74. Asp173 (proton acceptor) is an active-site residue. Phosphoserine is present on Ser211.

It belongs to the protein kinase superfamily. Ser/Thr protein kinase family.

It catalyses the reaction L-seryl-[protein] + ATP = O-phospho-L-seryl-[protein] + ADP + H(+). The enzyme catalyses L-threonyl-[protein] + ATP = O-phospho-L-threonyl-[protein] + ADP + H(+). In terms of biological role, required for heat stress-instigated phosphorylation of BCY1 which is involved in cell wall integrity signaling. Regulates activity of MSN2, a transcription factor that binds to the stress-response element (STRE). Probably promotes formation of a complex between MSN2 and DNA. Regulates the stability of ROG1. The polypeptide is Glycogen synthase kinase-3 homolog YGK3 (YGK3) (Saccharomyces cerevisiae (strain ATCC 204508 / S288c) (Baker's yeast)).